The primary structure comprises 198 residues: MLYPTPIAKLIDSFSKLPGIGIKTATRLAFYTIGMSDDDVNEFAKNLLAAKRELSYCSVCGNLTDEDPCAICQDQSRDQSTILIVEDSRDVSAMENIQEYHGLYHVLHGLISPMNGVGPDDINLKSLITRLMDSEVTEVIVATNATADGEATSMYISRVLKPAGIKVTRLARGLAVGSDIEYADEVTLIRAIENRTEL.

The C4-type zinc finger occupies 57–72; that stretch reads CSVCGNLTDEDPCAIC. Residues 80–175 enclose the Toprim domain; it reads STILIVEDSR…KVTRLARGLA (96 aa).

It belongs to the RecR family.

May play a role in DNA repair. It seems to be involved in an RecBC-independent recombinational process of DNA repair. It may act with RecF and RecO. The protein is Recombination protein RecR of Streptococcus sanguinis (strain SK36).